Consider the following 479-residue polypeptide: Trigger factor (479 aa).

Positions Gly174–Pro261 constitute a PPIase FKBP-type domain. The interval Val438–Ser479 is disordered. Over residues Lys453–Thr464 the composition is skewed to basic residues. A compositionally biased stretch (basic and acidic residues) spans Asn468–Ser479.

This sequence belongs to the FKBP-type PPIase family. Tig subfamily.

The protein localises to the cytoplasm. It carries out the reaction [protein]-peptidylproline (omega=180) = [protein]-peptidylproline (omega=0). In terms of biological role, involved in protein export. Acts as a chaperone by maintaining the newly synthesized protein in an open conformation. Functions as a peptidyl-prolyl cis-trans isomerase. In Prochlorococcus marinus (strain MIT 9313), this protein is Trigger factor.